The chain runs to 378 residues: Dual-specificity RNA methyltransferase RlmN 2 (378 aa).

Glu-113 (proton acceptor) is an active-site residue. A Radical SAM core domain is found at 119 to 355; the sequence is TEDRRTLCVS…AAYIRRNRGR (237 aa). Cys-126 and Cys-361 are oxidised to a cystine. Residues Cys-133, Cys-137, and Cys-140 each contribute to the [4Fe-4S] cluster site. S-adenosyl-L-methionine-binding positions include 188-189, Ser-220, 242-244, and Asn-318; these read GE and SLN. Cys-361 serves as the catalytic S-methylcysteine intermediate.

This sequence belongs to the radical SAM superfamily. RlmN family. The cofactor is [4Fe-4S] cluster.

Its subcellular location is the cytoplasm. It carries out the reaction adenosine(2503) in 23S rRNA + 2 reduced [2Fe-2S]-[ferredoxin] + 2 S-adenosyl-L-methionine = 2-methyladenosine(2503) in 23S rRNA + 5'-deoxyadenosine + L-methionine + 2 oxidized [2Fe-2S]-[ferredoxin] + S-adenosyl-L-homocysteine. It catalyses the reaction adenosine(37) in tRNA + 2 reduced [2Fe-2S]-[ferredoxin] + 2 S-adenosyl-L-methionine = 2-methyladenosine(37) in tRNA + 5'-deoxyadenosine + L-methionine + 2 oxidized [2Fe-2S]-[ferredoxin] + S-adenosyl-L-homocysteine. Its function is as follows. Specifically methylates position 2 of adenine 2503 in 23S rRNA and position 2 of adenine 37 in tRNAs. m2A2503 modification seems to play a crucial role in the proofreading step occurring at the peptidyl transferase center and thus would serve to optimize ribosomal fidelity. The sequence is that of Dual-specificity RNA methyltransferase RlmN 2 from Myxococcus xanthus (strain DK1622).